A 648-amino-acid polypeptide reads, in one-letter code: Nucleoside triphosphatase I (648 aa).

Residues 48-212 (FIGLKNLNSM…NNLIGLLRPN (165 aa)) form the Helicase ATP-binding domain. 61–68 (WDTGMGKT) provides a ligand contact to ATP. The DEXH box motif lies at 150–153 (DEVH). Positions 378–541 (YIETCKIILN…KINVIFDLLK (164 aa)) constitute a Helicase C-terminal domain. Residues 467-533 (DIIILDMPWN…DIIKDKQGKI (67 aa)) form a binding to the cap-specific mRNA (nucleoside-2'-O-)-methyltransferase region.

This sequence belongs to the helicase family. NPH I subfamily. Monomer. Interacts (via C-terminus) with RAP94 (via N-terminus). Interacts with the cap-specific mRNA (nucleoside-2'-O-)-methyltransferase.

It localises to the virion. The enzyme catalyses a ribonucleoside 5'-triphosphate + H2O = a ribonucleoside 5'-diphosphate + phosphate + H(+). In terms of biological role, DNA-dependent ATPase required for providing the needed energy to achieve the termination of early transcripts. Acts in concert with the RAP94 subunit of the virion RNA polymerase and the capping enzyme/VTF to catalyze release of UUUUUNU-containing nascent RNA from the elongation complex. NPH-I must bind ssDNA in order to exhibit ATPase activity. The sequence is that of Nucleoside triphosphatase I (NPH1) from Amsacta (AmEPV).